The following is a 485-amino-acid chain: Portal protein (485 aa).

A disordered region spans residues 456–485 (MVDADPTVPGSPNPTPAPKPQPAIEGGDSA). Positions 464-476 (PGSPNPTPAPKPQ) are enriched in pro residues.

This sequence belongs to the SPP1-like portal protein family. Homododecamer.

The protein resides in the virion. Forms the portal vertex of the capsid. This portal plays critical roles in head assembly, genome packaging, neck/tail attachment, and genome ejection. The portal protein multimerizes as a single ring-shaped homododecamer arranged around a central channel. Binds to the terminase subunits to form the packaging machine. This Mycobacterium (Mycobacteriophage D29) protein is Portal protein (14).